The primary structure comprises 317 residues: tRNA dimethylallyltransferase (317 aa).

Residue 19–26 (GPTASGKS) coordinates ATP. Position 21–26 (21–26 (TASGKS)) interacts with substrate. The segment at 44–47 (DSMQ) is interaction with substrate tRNA.

The protein belongs to the IPP transferase family. In terms of assembly, monomer. The cofactor is Mg(2+).

It catalyses the reaction adenosine(37) in tRNA + dimethylallyl diphosphate = N(6)-dimethylallyladenosine(37) in tRNA + diphosphate. Catalyzes the transfer of a dimethylallyl group onto the adenine at position 37 in tRNAs that read codons beginning with uridine, leading to the formation of N6-(dimethylallyl)adenosine (i(6)A). The protein is tRNA dimethylallyltransferase of Methylorubrum populi (strain ATCC BAA-705 / NCIMB 13946 / BJ001) (Methylobacterium populi).